The chain runs to 222 residues: Uracil-DNA glycosylase (222 aa).

D66 functions as the Proton acceptor in the catalytic mechanism.

The protein belongs to the uracil-DNA glycosylase (UDG) superfamily. UNG family.

The protein resides in the cytoplasm. The enzyme catalyses Hydrolyzes single-stranded DNA or mismatched double-stranded DNA and polynucleotides, releasing free uracil.. In terms of biological role, excises uracil residues from the DNA which can arise as a result of misincorporation of dUMP residues by DNA polymerase or due to deamination of cytosine. The chain is Uracil-DNA glycosylase from Porphyromonas gingivalis (strain ATCC 33277 / DSM 20709 / CIP 103683 / JCM 12257 / NCTC 11834 / 2561).